A 470-amino-acid polypeptide reads, in one-letter code: Regulator of microtubule dynamics protein 3 (470 aa).

Residues 1-12 (MSRLGALGGSRA) lie on the Mitochondrial intermembrane side of the membrane. The helical transmembrane segment at 13-35 (GLGLLLGTAAGLGFLCVLYSQRW) threads the bilayer. The Cytoplasmic segment spans residues 36–470 (KRTQRHGRSH…DLEELEVILG (435 aa)). Serine 44, serine 46, serine 50, and serine 57 each carry phosphoserine. Positions 91 to 125 (LDRLDFVLTSLMALRREVEELQRSLQGLAGEIVGE) form a coiled coil. An FFAT motif is present at residues 157-163 (VYFTASS). Threonine 160 is modified (phosphothreonine). The interval 168–205 (TDAESEGGYTTANAESDYERDSDKESGDAEDEVSCETV) is disordered. Phosphoserine occurs at positions 183, 193, 212, and 233. Residues 184 to 194 (DYERDSDKESG) show a composition bias toward basic and acidic residues.

This sequence belongs to the RMDN family. As to quaternary structure, interacts with PTPN2. Interacts with microtubules. Interacts with VAPB. Interacts (via FFAT motif) with MOSPD2 (via MSP domain). Interacts (via phosphorylated FFAT motif) with MOSPD2, VAPA and VAPB. In terms of processing, phosphorylation at Thr-160 of the FFAT motif activates interaction with MOSPD2, VAPA and VAPB.

The protein resides in the mitochondrion outer membrane. The protein localises to the cytoplasm. Its subcellular location is the nucleus. It localises to the cytoskeleton. It is found in the spindle. The protein resides in the spindle pole. Its function is as follows. Involved in cellular calcium homeostasis regulation. May participate in differentiation and apoptosis of keratinocytes. Overexpression induces apoptosis. This Mus musculus (Mouse) protein is Regulator of microtubule dynamics protein 3.